A 76-amino-acid polypeptide reads, in one-letter code: DNA-directed RNA polymerase subunit epsilon (76 aa).

This sequence belongs to the RNA polymerase subunit epsilon family. In terms of assembly, RNAP is composed of a core of 2 alpha, a beta and a beta' subunit. The core is associated with a delta subunit, and at least one of epsilon or omega. When a sigma factor is associated with the core the holoenzyme is formed, which can initiate transcription.

It carries out the reaction RNA(n) + a ribonucleoside 5'-triphosphate = RNA(n+1) + diphosphate. In terms of biological role, a non-essential component of RNA polymerase (RNAP). This Streptococcus sanguinis (strain SK36) protein is DNA-directed RNA polymerase subunit epsilon.